We begin with the raw amino-acid sequence, 391 residues long: Transmembrane protein 79 (391 aa).

The disordered stretch occupies residues methionine 1–aspartate 114. At methionine 1–serine 200 the chain is on the cytoplasmic side. Residues alanine 103–aspartate 114 show a composition bias toward basic and acidic residues. A helical membrane pass occupies residues valine 201–phenylalanine 221. The Extracellular portion of the chain corresponds to aspartate 222–glycine 240. A helical membrane pass occupies residues valine 241 to phenylalanine 261. Topologically, residues serine 262 to glutamine 279 are cytoplasmic. Residues tyrosine 280–threonine 300 traverse the membrane as a helical segment. Residues tyrosine 301–leucine 309 are Extracellular-facing. The helical transmembrane segment at leucine 310–valine 330 threads the bilayer. Residues glycine 331–tyrosine 339 are Cytoplasmic-facing. Residues glycine 340–valine 360 form a helical membrane-spanning segment. Residues glutamate 361 to glycine 391 are Extracellular-facing.

As to expression, expressed in the epidermis of the skin. Expressed in epithelial cells of the outermost layer of the stratum granulosum (SG) and in hair follicles (at protein level).

It is found in the lysosome. The protein localises to the golgi apparatus. The protein resides in the trans-Golgi network. Its subcellular location is the membrane. In terms of biological role, contributes to the epidermal integrity and skin barrier function. Plays a role in the lamellar granule (LG) secretory system and in the stratum corneum (SC) epithelial cell formation. The protein is Transmembrane protein 79 (Tmem79) of Mus musculus (Mouse).